Here is a 187-residue protein sequence, read N- to C-terminus: MAIGMSELKKGLKIELGGVPYRIVEYQHVKPGKGAAFVRAKIKSFLDGKVIEKTFHAGDKCEEPNLVEKTMQYLYHDGDAYQFMDIESYEQIALSDSQVGEASKWMLDGMQVQVLLYNDKAISVDVPQVVALKIVETAPNFKGDTSSASKKPATLETGAVVQVPFHVLEGEIIKVNTETEEYLEKVK.

Belongs to the elongation factor P family.

It localises to the cytoplasm. It participates in protein biosynthesis; polypeptide chain elongation. Its function is as follows. Involved in peptide bond synthesis. Stimulates efficient translation and peptide-bond synthesis on native or reconstituted 70S ribosomes in vitro. Probably functions indirectly by altering the affinity of the ribosome for aminoacyl-tRNA, thus increasing their reactivity as acceptors for peptidyl transferase. This chain is Elongation factor P, found in Helicobacter acinonychis (strain Sheeba).